The primary structure comprises 398 residues: Energy-coupling factor transporter ATP-binding protein EcfA2 (398 aa).

In terms of domain architecture, ABC transporter spans I5–K240. Position 38 to 45 (G38 to S45) interacts with ATP.

The protein belongs to the ABC transporter superfamily. Energy-coupling factor EcfA family. Forms a stable energy-coupling factor (ECF) transporter complex composed of 2 membrane-embedded substrate-binding proteins (S component), 2 ATP-binding proteins (A component) and 2 transmembrane proteins (T component).

It localises to the cell membrane. Functionally, ATP-binding (A) component of a common energy-coupling factor (ECF) ABC-transporter complex. Unlike classic ABC transporters this ECF transporter provides the energy necessary to transport a number of different substrates. In Methanospirillum hungatei JF-1 (strain ATCC 27890 / DSM 864 / NBRC 100397 / JF-1), this protein is Energy-coupling factor transporter ATP-binding protein EcfA2.